A 430-amino-acid chain; its full sequence is 3-phosphoshikimate 1-carboxyvinyltransferase (430 aa).

Lys23, Ser24, and Arg28 together coordinate 3-phosphoshikimate. Lys23 serves as a coordination point for phosphoenolpyruvate. Positions 95 and 123 each coordinate phosphoenolpyruvate. 3-phosphoshikimate is bound by residues Ser169, Gln171, Asp315, and Lys342. Gln171 is a binding site for phosphoenolpyruvate. Asp315 (proton acceptor) is an active-site residue. Residues Arg346 and Arg388 each coordinate phosphoenolpyruvate.

It belongs to the EPSP synthase family. As to quaternary structure, monomer.

Its subcellular location is the cytoplasm. It catalyses the reaction 3-phosphoshikimate + phosphoenolpyruvate = 5-O-(1-carboxyvinyl)-3-phosphoshikimate + phosphate. It functions in the pathway metabolic intermediate biosynthesis; chorismate biosynthesis; chorismate from D-erythrose 4-phosphate and phosphoenolpyruvate: step 6/7. Its function is as follows. Catalyzes the transfer of the enolpyruvyl moiety of phosphoenolpyruvate (PEP) to the 5-hydroxyl of shikimate-3-phosphate (S3P) to produce enolpyruvyl shikimate-3-phosphate and inorganic phosphate. In Streptococcus pyogenes serotype M6 (strain ATCC BAA-946 / MGAS10394), this protein is 3-phosphoshikimate 1-carboxyvinyltransferase.